Consider the following 346-residue polypeptide: Phenylalanine--tRNA ligase alpha subunit (346 aa).

Glutamate 261 contributes to the Mg(2+) binding site.

This sequence belongs to the class-II aminoacyl-tRNA synthetase family. Phe-tRNA synthetase alpha subunit type 1 subfamily. In terms of assembly, tetramer of two alpha and two beta subunits. The cofactor is Mg(2+).

The protein localises to the cytoplasm. It carries out the reaction tRNA(Phe) + L-phenylalanine + ATP = L-phenylalanyl-tRNA(Phe) + AMP + diphosphate + H(+). The protein is Phenylalanine--tRNA ligase alpha subunit of Streptococcus agalactiae serotype Ia (strain ATCC 27591 / A909 / CDC SS700).